The chain runs to 633 residues: UvrABC system protein C (633 aa).

Residues 21 to 100 (TDPGVYKFLD…IKELQPRYNV (80 aa)) enclose the GIY-YIG domain. Residues 214-249 (QELMDLLKDEMQRQSDAHNFEEAARLRDQVKALKDY) form the UVR domain.

Belongs to the UvrC family. In terms of assembly, interacts with UvrB in an incision complex.

It localises to the cytoplasm. Its function is as follows. The UvrABC repair system catalyzes the recognition and processing of DNA lesions. UvrC both incises the 5' and 3' sides of the lesion. The N-terminal half is responsible for the 3' incision and the C-terminal half is responsible for the 5' incision. In Salinibacter ruber (strain DSM 13855 / M31), this protein is UvrABC system protein C.